We begin with the raw amino-acid sequence, 169 residues long: Transcription antitermination protein NusB (169 aa).

The interval 1-20 (MAESSNKPFRGPVRANDRKA) is disordered.

This sequence belongs to the NusB family.

In terms of biological role, involved in transcription antitermination. Required for transcription of ribosomal RNA (rRNA) genes. Binds specifically to the boxA antiterminator sequence of the ribosomal RNA (rrn) operons. This chain is Transcription antitermination protein NusB, found in Bradyrhizobium sp. (strain BTAi1 / ATCC BAA-1182).